Here is a 597-residue protein sequence, read N- to C-terminus: Elongation factor 4 (597 aa).

Residues 2–184 (QHIRNFSIIA…AVISRIPPPK (183 aa)) form the tr-type G domain. Residues 14 to 19 (DHGKST) and 131 to 134 (NKID) contribute to the GTP site.

The protein belongs to the TRAFAC class translation factor GTPase superfamily. Classic translation factor GTPase family. LepA subfamily.

The protein resides in the cell inner membrane. It catalyses the reaction GTP + H2O = GDP + phosphate + H(+). Its function is as follows. Required for accurate and efficient protein synthesis under certain stress conditions. May act as a fidelity factor of the translation reaction, by catalyzing a one-codon backward translocation of tRNAs on improperly translocated ribosomes. Back-translocation proceeds from a post-translocation (POST) complex to a pre-translocation (PRE) complex, thus giving elongation factor G a second chance to translocate the tRNAs correctly. Binds to ribosomes in a GTP-dependent manner. The protein is Elongation factor 4 of Nitrosospira multiformis (strain ATCC 25196 / NCIMB 11849 / C 71).